Reading from the N-terminus, the 297-residue chain is HTH-type transcriptional regulator ArgP (297 aa).

Residues 4–60 enclose the HTH lysR-type domain; the sequence is PDYRTLQALDAVIRERGFERAAQKLCITQSAVSQRIKQLENMFGQPLLVRTVPPRPT. The H-T-H motif DNA-binding region spans 21-40; it reads FERAAQKLCITQSAVSQRIK.

The protein belongs to the LysR transcriptional regulatory family. Homodimer.

Functionally, controls the transcription of genes involved in arginine and lysine metabolism. The protein is HTH-type transcriptional regulator ArgP of Escherichia fergusonii (strain ATCC 35469 / DSM 13698 / CCUG 18766 / IAM 14443 / JCM 21226 / LMG 7866 / NBRC 102419 / NCTC 12128 / CDC 0568-73).